Consider the following 382-residue polypeptide: MSDVIKNFFKLESAGGILLVIAAAIAMMIANSSLAPMYDTFLHSYIGGMSVSHWINDGLMAVFFLLIGLEVKRELLEGALKSKETAIFPAIAAVGGMLAPALVYVAFNMGDPEALSGWAIPAATDIAFALGIMALLGNRVPVSLKVFLLALAIIDDLGVVVIIAFFYTSDLSVLALVIGFVMTGLLFLLNAKHVTKIRWYLLVGFILWVSVLQSGVHATLAGVVLGFAIPLKGNKGERSPLKHMEHALHPYVAFAILPVFAFANAGISLEGVSLDSLTTTLPLGVALGLFLGKPLGIFSFSYLAVKSGVAKLPTGVNMKHIFAVSVLCGIGFTMSIFISSLAFGGVNPEFDKLARLGILMGSTFAAVVGYALLSISLPKKAA.

The next 11 helical transmembrane spans lie at 14–34 (AGGI…NSSL), 49–69 (MSVS…LIGL), 87–107 (IFPA…YVAF), 117–137 (GWAI…ALLG), 146–166 (VFLL…IAFF), 171–191 (LSVL…LLNA), 205–225 (FILW…GVVL), 252–272 (VAFA…LEGV), 285–305 (VALG…YLAV), 321–341 (IFAV…ISSL), and 356–376 (LGIL…LSIS).

This sequence belongs to the NhaA Na(+)/H(+) (TC 2.A.33) antiporter family.

Its subcellular location is the cell inner membrane. It catalyses the reaction Na(+)(in) + 2 H(+)(out) = Na(+)(out) + 2 H(+)(in). Na(+)/H(+) antiporter that extrudes sodium in exchange for external protons. The chain is Na(+)/H(+) antiporter NhaA from Aliivibrio fischeri (strain ATCC 700601 / ES114) (Vibrio fischeri).